Reading from the N-terminus, the 381-residue chain is Neuropeptide Y receptor type 2 (381 aa).

The segment at 1 to 37 (MGPIGTEADENQTVEEIKVEPYGPGHTTPRGELAPDP) is disordered. At 1–52 (MGPIGTEADENQTVEEIKVEPYGPGHTTPRGELAPDPEPELIDSTKLTEVRV) the chain is on the extracellular side. N-linked (GlcNAc...) asparagine glycosylation is present at asparagine 11. Residues 53 to 73 (VLILAYCSIILLGVVGNSLVI) form a helical membrane-spanning segment. Over 74-87 (HVVIKFKSMRTVTN) the chain is Cytoplasmic. A helical transmembrane segment spans residues 88 to 108 (FFIANLAVADLLVNTLCLPFT). Over 109-125 (LTYTLMGEWKMGPVLCH) the chain is Extracellular. Cysteine 124 and cysteine 204 are disulfide-bonded. Residues 126-146 (LVPYAQGLAVQVSTVTLTVIA) form a helical membrane-spanning segment. The Cytoplasmic portion of the chain corresponds to 147 to 166 (LDRHRCIVYHLDSKISKQNS). The chain crosses the membrane as a helical span at residues 167 to 187 (FLIIGLAWGISALLASPLAIF). The Extracellular segment spans residues 188 to 217 (REYSLIEIIPDFEIVACTEKWPGEEKSIYG). Residues 218–238 (TVYSLSSLLILYVLPLGIISV) traverse the membrane as a helical segment. The Cytoplasmic segment spans residues 239 to 269 (SYVRIWSKLKNHVSPGAANDHYHQRRQKTTK). A helical membrane pass occupies residues 270 to 290 (MLVFVVVVFAVSWLPLHAFQL). Topologically, residues 291-305 (AVDIDSQVLDLKEYK) are extracellular. Residues 306–326 (LIFTVFHIIAMCSTFANPLLY) form a helical membrane-spanning segment. Topologically, residues 327–381 (GWMNSNYRKAFLSAFRCQQRLDAIQSEVCVTGKAKTNVEVEKNHGAADSAEATNV) are cytoplasmic. Cysteine 343 is lipidated: S-palmitoyl cysteine.

Belongs to the G-protein coupled receptor 1 family.

The protein resides in the cell membrane. Functionally, receptor for neuropeptide Y and peptide YY. This chain is Neuropeptide Y receptor type 2 (NPY2R), found in Cavia porcellus (Guinea pig).